Here is a 254-residue protein sequence, read N- to C-terminus: Adenosylcobinamide-GDP ribazoletransferase (254 aa).

The next 6 helical transmembrane spans lie at 36–56 (YYPL…TLLL), 61–81 (PLVT…GIHL), 114–134 (ALSA…LLAL), 138–158 (LVPY…LIGV), 197–217 (WVLQ…ILLF), and 232–252 (LYGA…FPLL).

Belongs to the CobS family. Mg(2+) is required as a cofactor.

It is found in the cell membrane. The enzyme catalyses alpha-ribazole + adenosylcob(III)inamide-GDP = adenosylcob(III)alamin + GMP + H(+). The catalysed reaction is alpha-ribazole 5'-phosphate + adenosylcob(III)inamide-GDP = adenosylcob(III)alamin 5'-phosphate + GMP + H(+). It functions in the pathway cofactor biosynthesis; adenosylcobalamin biosynthesis; adenosylcobalamin from cob(II)yrinate a,c-diamide: step 7/7. Joins adenosylcobinamide-GDP and alpha-ribazole to generate adenosylcobalamin (Ado-cobalamin). Also synthesizes adenosylcobalamin 5'-phosphate from adenosylcobinamide-GDP and alpha-ribazole 5'-phosphate. In Desulfitobacterium hafniense (strain Y51), this protein is Adenosylcobinamide-GDP ribazoletransferase.